The sequence spans 463 residues: Elongation factor 1-alpha (463 aa).

The tr-type G domain maps to 8–245 (KTHLNIVIIG…DALVPPVRPA (238 aa)). A G1 region spans residues 17 to 24 (GHVDSGKS). 17–24 (GHVDSGKS) serves as a coordination point for GTP. Residues 73–77 (GITID) form a G2 region. The G3 stretch occupies residues 94–97 (DAPG). GTP is bound by residues 94–98 (DAPGH) and 156–159 (NKMD). Residues 156 to 159 (NKMD) form a G4 region. Positions 197 to 199 (SGW) are G5.

This sequence belongs to the TRAFAC class translation factor GTPase superfamily. Classic translation factor GTPase family. EF-Tu/EF-1A subfamily. As to quaternary structure, the 42S RNP particle comprises four subunits each of which contains one molecule of 5S RNA, three molecules of tRNA, two molecules of EF1-alpha and one molecule of the 5S RNA binding protein 43.

The protein resides in the cytoplasm. Its function is as follows. This protein is one of two protein components of a 42S RNP particle that is very abundant in previtellogenic oocytes. A major function served by 42sp50 appears to be the storage of tRNAs for later use in oogenesis and early embryogenesis. Purified 42S particles can directly transfer aminoacyl tRNA to ribosomes. The chain is Elongation factor 1-alpha from Xenopus laevis (African clawed frog).